We begin with the raw amino-acid sequence, 765 residues long: E3 ubiquitin-protein ligase SlrP (765 aa).

Residues methionine 1–phenylalanine 451 form an interaction with target proteins region. LRR repeat units lie at residues glutamine 200–glutamine 219, asparagine 221–threonine 242, isoleucine 243–serine 262, alanine 263–glutamate 284, leucine 285–glycine 305, isoleucine 306–proline 325, glycine 326–proline 346, glutamate 347–threonine 368, isoleucine 369–alanine 389, and leucine 390–phenylalanine 410. The linker stretch occupies residues alanine 452–valine 461. Residues threonine 462–arginine 765 form an E3 ubiquitin-protein ligase catalytic domain region. Residues proline 464–serine 758 form the NEL domain. Residue cysteine 546 is the Glycyl thioester intermediate of the active site.

It belongs to the LRR-containing bacterial E3 ligase family. Interacts with host TXN. Post-translationally, ubiquitinated in the presence of host E1 ubiquitin-activating enzyme, E2 ubiquitin-conjugating enzyme and ubiquitin.

The protein localises to the secreted. The protein resides in the host cytoplasm. It carries out the reaction S-ubiquitinyl-[E2 ubiquitin-conjugating enzyme]-L-cysteine + [acceptor protein]-L-lysine = [E2 ubiquitin-conjugating enzyme]-L-cysteine + N(6)-ubiquitinyl-[acceptor protein]-L-lysine.. Binding to TXN is inhibited by hydrogen peroxide in vitro. Its function is as follows. Effector proteins function to alter host cell physiology and promote bacterial survival in host tissues. This protein is an E3 ubiquitin ligase that interferes with host's ubiquitination pathway. Can ubiquitinate both ubiquitin and host TXN (thioredoxin). Leads to significant decrease of thioredoxin activity and increase of host cell death. The chain is E3 ubiquitin-protein ligase SlrP (slrP) from Salmonella typhimurium (strain LT2 / SGSC1412 / ATCC 700720).